The following is a 234-amino-acid chain: Large ribosomal subunit protein uL1 (234 aa).

Belongs to the universal ribosomal protein uL1 family. Part of the 50S ribosomal subunit.

Functionally, binds directly to 23S rRNA. The L1 stalk is quite mobile in the ribosome, and is involved in E site tRNA release. Protein L1 is also a translational repressor protein, it controls the translation of the L11 operon by binding to its mRNA. This is Large ribosomal subunit protein uL1 from Bartonella tribocorum (strain CIP 105476 / IBS 506).